The chain runs to 322 residues: PI-PLC X domain-containing protein 3 (322 aa).

The PI-PLC X-box domain maps to 22-197 (TLHGIPLTNL…EYQVLVFYHN (176 aa)). Residues histidine 37 and histidine 114 contribute to the active site.

The polypeptide is PI-PLC X domain-containing protein 3 (plcxd3) (Danio rerio (Zebrafish)).